Here is a 327-residue protein sequence, read N- to C-terminus: Phenylalanine--tRNA ligase alpha subunit (327 aa).

E252 contacts Mg(2+).

Belongs to the class-II aminoacyl-tRNA synthetase family. Phe-tRNA synthetase alpha subunit type 1 subfamily. As to quaternary structure, tetramer of two alpha and two beta subunits. Mg(2+) is required as a cofactor.

The protein localises to the cytoplasm. It catalyses the reaction tRNA(Phe) + L-phenylalanine + ATP = L-phenylalanyl-tRNA(Phe) + AMP + diphosphate + H(+). This is Phenylalanine--tRNA ligase alpha subunit from Escherichia coli O139:H28 (strain E24377A / ETEC).